An 877-amino-acid polypeptide reads, in one-letter code: ATP-dependent RNA helicase dbp7 (877 aa).

2 disordered regions span residues 34–163 (AKKT…LPPG) and 225–251 (FNPT…APLT). Basic and acidic residues predominate over residues 50-73 (STREIFSERQHDTGAEEYIGREPS). The Q motif signature appears at 255-284 (ATFTNLGLSRRLAAHLSTKLDMKAPTAIQK). Residues 288 to 484 (TQLISDDSDA…EISLKDAVHI (197 aa)) form the Helicase ATP-binding domain. 301–308 (AETGSGKT) is an ATP binding site. Residues 417-420 (DEGD) carry the DEAD box motif. In terms of domain architecture, Helicase C-terminal spans 512-719 (QLKQSYAIVP…LTHHTAEDLI (208 aa)). Residues 803–851 (PGLRPAKMTKADRSVAARKAKRGEKEEEKAPEGERVRKQRKMELDLPTV) are disordered. The segment covering 825 to 846 (GEKEEEKAPEGERVRKQRKMEL) has biased composition (basic and acidic residues).

It belongs to the DEAD box helicase family. DDX31/DBP7 subfamily.

It localises to the nucleus. It is found in the nucleolus. It carries out the reaction ATP + H2O = ADP + phosphate + H(+). Functionally, ATP-binding RNA helicase involved in the biogenesis of 60S ribosomal subunits and is required for the normal formation of 25S and 5.8S rRNAs. This chain is ATP-dependent RNA helicase dbp7 (dbp7), found in Sclerotinia sclerotiorum (strain ATCC 18683 / 1980 / Ss-1) (White mold).